The sequence spans 100 residues: Urease subunit gamma (100 aa).

Belongs to the urease gamma subunit family. Heterotrimer of UreA (gamma), UreB (beta) and UreC (alpha) subunits. Three heterotrimers associate to form the active enzyme.

The protein resides in the cytoplasm. The catalysed reaction is urea + 2 H2O + H(+) = hydrogencarbonate + 2 NH4(+). The protein operates within nitrogen metabolism; urea degradation; CO(2) and NH(3) from urea (urease route): step 1/1. The chain is Urease subunit gamma from Blochmanniella pennsylvanica (strain BPEN).